The primary structure comprises 129 residues: Protein BUNDLE SHEATH DEFECTIVE 2, chloroplastic (129 aa).

The transit peptide at 1-43 (MAATASLTTTAPSPPALLKASAPLLISFRPVSRHCKNLCIKTK) directs the protein to the chloroplast. Residues 49–123 (QSAKKHQKVK…AGFLGGFLST (75 aa)) form a CR-type zinc finger. The Zn(2+) site is built by cysteine 62, cysteine 65, asparagine 68, cysteine 73, cysteine 76, cysteine 97, cysteine 100, glutamate 105, cysteine 108, and cysteine 111.

It belongs to the BSD2 chaperone family. As to quaternary structure, interacts with the RuBisCo large subunit (RbcL) assembled as an intermediate complex made of eight RbcL and eight BSD2 subunits. Expressed in shoot tissues, in both bundle sheath and mesophyll cells.

Its subcellular location is the plastid. The protein resides in the chloroplast stroma. Its function is as follows. Chloroplast chaperone required for RuBisCo complex biogenesis and translational regulation of the RuBisCo large subunit (RbcL). Stabilizes an end-state assembly intermediate of eight RbcL subunits until the small subunits (RBCSs) become available to produce a complete stable RuBisCo complex containing eight small and eight large subunits. Involved in the differentiation of bundle sheath cells, especially chloroplast structure. The protein is Protein BUNDLE SHEATH DEFECTIVE 2, chloroplastic of Zea mays (Maize).